We begin with the raw amino-acid sequence, 369 residues long: Homoserine O-succinyltransferase (369 aa).

Residues 49–328 (NAVFICHALT…RFDSTQSARM (280 aa)) enclose the AB hydrolase-1 domain. Catalysis depends on serine 154, which acts as the Nucleophile. Residue arginine 224 participates in substrate binding. Active-site residues include aspartate 317 and histidine 350. Aspartate 351 contributes to the substrate binding site.

It belongs to the AB hydrolase superfamily. MetX family. Homodimer.

The protein resides in the cytoplasm. The catalysed reaction is L-homoserine + succinyl-CoA = O-succinyl-L-homoserine + CoA. The protein operates within amino-acid biosynthesis; L-methionine biosynthesis via de novo pathway; O-succinyl-L-homoserine from L-homoserine: step 1/1. In terms of biological role, transfers a succinyl group from succinyl-CoA to L-homoserine, forming succinyl-L-homoserine. This Nocardioides sp. (strain ATCC BAA-499 / JS614) protein is Homoserine O-succinyltransferase.